The following is a 202-amino-acid chain: Recombination protein RecR (202 aa).

Residues 56 to 71 (CVVCGTVSDGELCRIC) form a C4-type zinc finger. The Toprim domain maps to 79 to 179 (TMICVVEEPK…TVTRLASGLP (101 aa)).

This sequence belongs to the RecR family.

May play a role in DNA repair. It seems to be involved in an RecBC-independent recombinational process of DNA repair. It may act with RecF and RecO. The sequence is that of Recombination protein RecR from Nocardia farcinica (strain IFM 10152).